Here is a 198-residue protein sequence, read N- to C-terminus: MILFSIFVALLAATRAQSQTPPGFKPSTELHLGVTFQDGVSVQAGHELLANEAKSAPQLDLHSLLAIHHTQTPFYHSTWKFMVFMIDIDVERNGTKYPLLHWYQPDLILSGRTGRLSIESDSNMPKAMYAGPAPPPGPAHRYVEVIFKQPERYELPADFEKFLENTIAARLGFDIEQFVKEAGLSEPVAGNWFLTATS.

An N-terminal signal peptide occupies residues 1-18 (MILFSIFVALLAATRAQS). The N-linked (GlcNAc...) asparagine glycan is linked to Asn-93.

It belongs to the tstN family.

In terms of biological role, phosphatidylethanolamine-binding protein; part of the gene cluster that mediates the biosynthesis of the antihypercholesterolemic agents phomoidrides which are dimeric anhydrides. Within the pathway, tstNB is not essential for dimerization and its function has still to be determined. The pathway begins with the highly reducing polyketide synthase tstA that catalyzes the formation of a C12-fatty acyl-ACP, starting from one acetate and 5 malonate units. The hydrolase tstM is involved in the release of the C12-fatty acyl chain from phiA. The alkylcitrate synthase (ACS) tstJ and the alkylcitrate dehydratase (ACDH) tstI then give rise to decarboxylated monomeric anhydrides by coupling the C12-fatty acyl chain with oxalacetic acid. The cyclase tstC is responsible for the dimerization of the monomeric anhydrides which leads to the production of prephomoidride that contains the characteristic bicyclo[4.3.1]deca-1,6-diene system of phomoidrides. Iterative oxidation catalyzed by the alpha-ketoglutarate-dependent dioxygenase tstK produced then phomoidride A. Finally, the methyltransferase tstE converts phomoidride A to phomoidride B via an acetalization reaction. The phosphatidylethanolamine-binding protein tstB and tstN are not essential for dimerization and their functions have still to be determined. The protein is Phomoidride biosynthesis cluster protein N of Talaromyces stipitatus (strain ATCC 10500 / CBS 375.48 / QM 6759 / NRRL 1006) (Penicillium stipitatum).